A 287-amino-acid polypeptide reads, in one-letter code: Large ribosomal subunit protein uL2 (287 aa).

The interval 214–287 (LGRRPEVRGS…SKRGRGGRDA (74 aa)) is disordered. Basic residues predominate over residues 271–287 (QRRRRKSSKRGRGGRDA).

The protein belongs to the universal ribosomal protein uL2 family. As to quaternary structure, part of the 50S ribosomal subunit. Forms a bridge to the 30S subunit in the 70S ribosome.

Its function is as follows. One of the primary rRNA binding proteins. Required for association of the 30S and 50S subunits to form the 70S ribosome, for tRNA binding and peptide bond formation. It has been suggested to have peptidyltransferase activity; this is somewhat controversial. Makes several contacts with the 16S rRNA in the 70S ribosome. The polypeptide is Large ribosomal subunit protein uL2 (Synechococcus elongatus (strain ATCC 33912 / PCC 7942 / FACHB-805) (Anacystis nidulans R2)).